Reading from the N-terminus, the 2311-residue chain is C2 domain-containing protein 3 (2311 aa).

Disordered regions lie at residues 447-511 (SDSS…TSRC) and 543-562 (GTAV…RPVR). Basic and acidic residues predominate over residues 470–509 (IALDRGRHRDNSPSEYKEDAKQTKGNDSLRDSKTSEKSTS). 6 C2 domains span residues 508 to 666 (TSRC…SVTC), 751 to 888 (GNGG…TRLL), 952 to 1112 (LDPP…HRED), 1136 to 1303 (PSGL…SGWY), 1370 to 1505 (HKRE…TLAV), and 1581 to 1713 (KTEV…CGWY). The interval 939–964 (GTSQTAMPRPAHFLDPPLSSSQMGRP) is disordered. 5 disordered regions span residues 1536–1589 (PSNS…LLDA), 1955–1977 (SEAY…GSLN), 2036–2065 (MTDR…PVNP), 2084–2233 (NDPS…SNLL), and 2261–2292 (VREG…PKEE). Basic and acidic residues-rich tracts occupy residues 1565 to 1589 (FEEK…LLDA) and 1955 to 1964 (SEAYEREGQR). Residues 2036-2047 (MTDRTSPWSSIL) are compositionally biased toward polar residues. The span at 2048-2059 (SERDSDSMDHPQ) shows a compositional bias: basic and acidic residues. The span at 2084–2095 (NDPSSVLSSARS) shows a compositional bias: polar residues. Over residues 2138 to 2151 (AESEAESQEMDGDP) the composition is skewed to acidic residues. Polar residues predominate over residues 2221-2233 (GSESPQVPPSNLL).

It localises to the cytoplasm. Its subcellular location is the cytoskeleton. The protein localises to the cilium basal body. The protein resides in the microtubule organizing center. It is found in the centrosome. It localises to the centriole. In terms of biological role, component of the centrioles that acts as a positive regulator of centriole elongation. Promotes assembly of centriolar distal appendage, a structure at the distal end of the mother centriole that acts as an anchor of the cilium. Required for primary cilium formation. In Xenopus tropicalis (Western clawed frog), this protein is C2 domain-containing protein 3 (c2cd3).